The following is a 158-amino-acid chain: Cyclic pyranopterin monophosphate synthase (158 aa).

Residues 76–78 (MCH) and 114–115 (ME) contribute to the substrate site. Residue aspartate 129 is part of the active site.

This sequence belongs to the MoaC family. Homohexamer; trimer of dimers.

It carries out the reaction (8S)-3',8-cyclo-7,8-dihydroguanosine 5'-triphosphate = cyclic pyranopterin phosphate + diphosphate. Its pathway is cofactor biosynthesis; molybdopterin biosynthesis. Its function is as follows. Catalyzes the conversion of (8S)-3',8-cyclo-7,8-dihydroguanosine 5'-triphosphate to cyclic pyranopterin monophosphate (cPMP). The chain is Cyclic pyranopterin monophosphate synthase from Clostridium perfringens (strain 13 / Type A).